The following is a 546-amino-acid chain: Chaperonin GroEL (546 aa).

Residues Thr-30–Pro-33, Lys-51, Asp-87–Thr-91, Gly-415, and Asp-496 contribute to the ATP site. Residues Pro-526–Met-546 form a disordered region. Positions Gly-534 to Met-546 are enriched in gly residues.

This sequence belongs to the chaperonin (HSP60) family. In terms of assembly, forms a cylinder of 14 subunits composed of two heptameric rings stacked back-to-back. Interacts with the co-chaperonin GroES.

The protein localises to the cytoplasm. The catalysed reaction is ATP + H2O + a folded polypeptide = ADP + phosphate + an unfolded polypeptide.. Functionally, together with its co-chaperonin GroES, plays an essential role in assisting protein folding. The GroEL-GroES system forms a nano-cage that allows encapsulation of the non-native substrate proteins and provides a physical environment optimized to promote and accelerate protein folding. This is Chaperonin GroEL from Rhodopseudomonas palustris.